Here is a 330-residue protein sequence, read N- to C-terminus: Clp protease adapter protein ClpF, chloroplastic (330 aa).

A chloroplast-targeting transit peptide spans 1-65; it reads MVQSQSLSTL…KSLKQRNLLR (65 aa). Residues 66-138 form an NTD, required for CLPS1-binding region; the sequence is VEARWPFQGG…VEEESIRLQE (73 aa). 2 coiled-coil regions span residues 112-139 and 175-195; these read NLEQ…LQEG and AAKL…VSAK. The UVR domain occupies 153 to 188; that stretch reads GISIIRLRADLQNAIDSEDYGLAAKLRDEISKLEAE. The tract at residues 203–310 is yccV-like; sequence EYAFRLGQKL…TAGDFIPVKQ (108 aa).

Binds to CLPC1 and CLPC2. Interacts with ClpS1; this interaction stimulates their association with ClpC. Associates with the Clp substrate HEMA1 (GluTR). In terms of tissue distribution, expressed constitutively in photosynthetic tissues such as leaves, stems and flowers, and, at low levels, in siliques.

The protein resides in the plastid. It is found in the chloroplast. Clp protease adapter that facilitates CLPS1 recruitment to ClpC chaperones thus forming a binary adapter for selective substrate recognition and delivery to plastid Clp protease system (CLPC). The sequence is that of Clp protease adapter protein ClpF, chloroplastic from Arabidopsis thaliana (Mouse-ear cress).